The following is a 630-amino-acid chain: A-type voltage-gated potassium channel KCND2 (630 aa).

Residues M1–A184 lie on the Cytoplasmic side of the membrane. Positions A2–M20 are interaction with KCNIP1, KCNIP2, and other family members. T38 carries the phosphothreonine modification. The interval E71–D90 is interaction with KCNIP1. 4 residues coordinate Zn(2+): H105, C111, C132, and C133. A helical membrane pass occupies residues L185 to T206. The Extracellular portion of the chain corresponds to V207–A226. The chain crosses the membrane as a helical span at residues V227–A249. The Cytoplasmic segment spans residues A250–R256. Residues F257–D281 traverse the membrane as a helical segment. The Extracellular segment spans residues N282–G287. A helical; Voltage-sensor transmembrane segment spans residues A288–S307. Residues Q308–A321 lie on the Cytoplasmic side of the membrane. The interval Q308 to A321 is S4-S5 linker. A helical transmembrane segment spans residues S322–A345. The Extracellular segment spans residues E346–I357. Positions P358–T369 form an intramembrane region, helical. Residues T370, L371, G372, and Y373 each coordinate K(+). The Selectivity filter motif lies at T370–D375. An intramembrane segment occupies T370–V377. Over P378–T380 the chain is Extracellular. Residues I381–P403 traverse the membrane as a helical segment. Topologically, residues V404–L630 are cytoplasmic. S438 bears the Phosphoserine mark. The tract at residues F474–T489 is required for dendritic targeting. The tract at residues F474–L630 is important for normal channel activation and inactivation, for interaction with KCNIP2, and probably other family members as well. Residues S548, S552, S572, and S575 each carry the phosphoserine modification. A disordered region spans residues I600 to N623. A phosphothreonine mark is found at T602 and T607. S616 bears the Phosphoserine mark. The PDZ-binding motif lies at V627–L630.

It belongs to the potassium channel family. D (Shal) (TC 1.A.1.2) subfamily. Kv4.2/KCND2 sub-subfamily. Homotetramer or heterotetramer with KCND1 or KCND3. Associates with the regulatory subunits KCNIP1, KCNIP2, KCNIP3 and KCNIP4. Interacts with DPP6, DPP10, DLG4 and DLG1. In vivo, probably exists as heteromeric complex containing variable proportions of KCND1, KCND2, KCND3, KCNIP1, KCNIP2, KCNIP3, KCNIP4, DPP6 and DPP10. The tetrameric channel can associate with up to four regulatory subunits, such as KCNIP2 or KCNIP4. Interaction with KCNIP3 promotes tetramerization and formation of a functional potassium channel. Interaction with four KCNIP4 chains does not reduce interaction with DPP10. Probably part of a complex consisting of KCNIP1, KCNIP2 isoform 3 and KCND2. Interacts with FLNA and FLNC. Interacts with NCS1/FREQ. Identified in a complex with cAMP-dependent protein kinase (PKA), CAV3, AKAP6 and KCND3 in cardiac myocytes. Interacts (via S1 and S2 helices) with DPP6; this interaction stabilizes the conformation of the S1-S2 helices and facilitates S4 conformational change, including S4 sliding up and down, thereby accelerating activation, inactivation, and recovery. Post-translationally, phosphorylation at Ser-438 in response to MAPK activation is increased in stimulated dendrites. Interaction with KCNIP2 and DPP6 propomtes phosphorylation by PKA at Ser-552. Phosphorylation at Ser-552 has no effect on interaction with KCNIP3, but is required for the regulation of channel activity by KCNIP3. Phosphorylation at Ser-552 leads to KCND2 internalization. Phosphorylated by MAPK in response to signaling via the metabotropic glutamate receptor GRM5. Phosphorylation at Ser-616 is required for the down-regulation of neuronal A-type currents in response to signaling via GRM5. As to expression, detected in brain frontal cortex.

It localises to the cell membrane. Its subcellular location is the cell projection. The protein localises to the dendrite. It is found in the synapse. The protein resides in the perikaryon. It localises to the postsynaptic cell membrane. Its subcellular location is the dendritic spine. The protein localises to the sarcolemma. It is found in the cell junction. The protein resides in the membrane. It localises to the caveola. It catalyses the reaction K(+)(in) = K(+)(out). Functionally, voltage-gated potassium channel that mediates transmembrane potassium transport in excitable membranes, primarily in the brain. Mediates the major part of the dendritic A-type current I(SA) in brain neurons. This current is activated at membrane potentials that are below the threshold for action potentials. It regulates neuronal excitability, prolongs the latency before the first spike in a series of action potentials, regulates the frequency of repetitive action potential firing, shortens the duration of action potentials and regulates the back-propagation of action potentials from the neuronal cell body to the dendrites. Contributes to the regulation of the circadian rhythm of action potential firing in suprachiasmatic nucleus neurons, which regulates the circadian rhythm of locomotor activity. Functions downstream of the metabotropic glutamate receptor GRM5 and plays a role in neuronal excitability and in nociception mediated by activation of GRM5. Mediates the transient outward current I(to) in rodent heart left ventricle apex cells, but not in human heart, where this current is mediated by another family member. Forms tetrameric potassium-selective channels through which potassium ions pass in accordance with their electrochemical gradient. The channel alternates between opened and closed conformations in response to the voltage difference across the membrane. Can form functional homotetrameric channels and heterotetrameric channels that contain variable proportions of KCND2 and KCND3; channel properties depend on the type of pore-forming alpha subunits that are part of the channel. In vivo, membranes probably contain a mixture of heteromeric potassium channel complexes. Interaction with specific isoforms of the regulatory subunits KCNIP1, KCNIP2, KCNIP3 or KCNIP4 strongly increases expression at the cell surface and thereby increases channel activity; it modulates the kinetics of channel activation and inactivation, shifts the threshold for channel activation to more negative voltage values, shifts the threshold for inactivation to less negative voltages and accelerates recovery after inactivation. Likewise, interaction with DPP6 or DPP10 promotes expression at the cell membrane and regulates both channel characteristics and activity. Upon depolarization, the channel goes from a resting closed state (C state) to an activated but non-conducting state (C* state), from there, the channel may either inactivate (I state) or open (O state). The sequence is that of A-type voltage-gated potassium channel KCND2 from Oryctolagus cuniculus (Rabbit).